Consider the following 297-residue polypeptide: MNLGTLVSETRNPQTMDLDALSTPELVKRFNEQDTRVAEAVKATLPDVARAVDAAAAALKSGGRIIYMGAGTSGRLGVLDASECPPTFGVPHGLVVGLIAGGPGALLKAVEGAEDSQQAGEDDLVALNLQEQDLVVGLAASGRTPYVIGGLRYARQSGCTTVAVSCNPDSPIAREANIAISPVVGPEALTGSTRLKSGTAQKMVLNMISTGAMVKFGKVYQNLMVDMKATNVKLVDRACRMVVEATGIGREEAETLLKQTDFEVKPAILMALTGLDAAAAREKLAAHQGFLRAALEH.

The SIS domain maps to 55–218; sequence AAAALKSGGR…STGAMVKFGK (164 aa). The active-site Proton donor is the Glu83. Glu114 is a catalytic residue.

It belongs to the GCKR-like family. MurNAc-6-P etherase subfamily. Homodimer.

The enzyme catalyses N-acetyl-D-muramate 6-phosphate + H2O = N-acetyl-D-glucosamine 6-phosphate + (R)-lactate. It participates in amino-sugar metabolism; 1,6-anhydro-N-acetylmuramate degradation. The protein operates within amino-sugar metabolism; N-acetylmuramate degradation. Its pathway is cell wall biogenesis; peptidoglycan recycling. Functionally, specifically catalyzes the cleavage of the D-lactyl ether substituent of MurNAc 6-phosphate, producing GlcNAc 6-phosphate and D-lactate. Together with AnmK, is also required for the utilization of anhydro-N-acetylmuramic acid (anhMurNAc) either imported from the medium or derived from its own cell wall murein, and thus plays a role in cell wall recycling. The sequence is that of N-acetylmuramic acid 6-phosphate etherase from Salmonella agona (strain SL483).